We begin with the raw amino-acid sequence, 106 residues long: MGYVIMTFSSARMSERRARIIYIWMHLSAYKINFPFVQFPTFFSLFRLQKKAAILIKNPSPFFLFFLFPYRKNSTARTIHQINQAVALVLLCVSHHLTYLPSVPSL.

The chain crosses the membrane as a helical span at residues 85-101 (AVALVLLCVSHHLTYLP).

The protein localises to the membrane. This is an uncharacterized protein from Saccharomyces cerevisiae (strain ATCC 204508 / S288c) (Baker's yeast).